Here is a 1292-residue protein sequence, read N- to C-terminus: Kinesin-like protein KIN-12A (1292 aa).

The disordered stretch occupies residues 1 to 86 (MKKHFTLPRN…LSAETATESG (86 aa)). The span at 19-29 (PHSPNPSISKS) shows a compositional bias: low complexity. Over residues 62-71 (PLPPRPPPSN) the composition is skewed to pro residues. Residues 91 to 426 (GVKVIVRMKP…LRFAQRAKAI (336 aa)) enclose the Kinesin motor domain. Residue 165 to 172 (GQTGSGKT) coordinates ATP. Microtubules-binding stretches follow at residues 293–297 (SSRSH), 326–332 (VDLAGSE), and 375–379 (HIPYR). Residues 424–461 (KAIQNKAVVNEVMQDDVNFLRGVIHQLRDELQRMKNDG) are neck. Positions 677-724 (SVSPTIRNSRKSLKTSELSTASQKDSEGENLVTEAADPSPATSKKMNN) are disordered. 2 coiled-coil regions span residues 945-992 (EVLK…CYID) and 1047-1232 (SEEL…NQLV).

Belongs to the TRAFAC class myosin-kinesin ATPase superfamily. Kinesin family. KIN-12 subfamily. Homodimer and heterodimer with KIN12B. Interacts with TIO.

Its subcellular location is the cytoplasm. The protein localises to the cytoskeleton. It is found in the phragmoplast. In terms of biological role, plus-end directed kinesin-like motor enzyme that plays a critical role in the organization of phragmoplast microtubules during cytokinesis. Constitutes a signaling module in association with serine/threonine-protein kinase TIO that is required to support phragmoplast expansion and cell-plate growth in plant cells. Binds microtubules in an ATP-sensitive manner. This chain is Kinesin-like protein KIN-12A, found in Arabidopsis thaliana (Mouse-ear cress).